The sequence spans 307 residues: DDRGK domain-containing protein 1 (307 aa).

At 1-2 (MD) the chain is on the lumenal side. The chain crosses the membrane as a helical span at residues 3–23 (LILLVGIAVALLVILATLYFL). The Cytoplasmic portion of the chain corresponds to 24 to 307 (QNKNKAAGEA…PVQSAAGGDS (284 aa)). Low complexity-rich tracts occupy residues 32-43 (EAKPAAAAPRRG) and 54-83 (RRAQ…PAAA). The segment at 32-162 (EAKPAAAAPR…EEVEAEAERK (131 aa)) is disordered. A compositionally biased stretch (basic and acidic residues) spans 117 to 162 (KMEAKEQKRLQREHELQEREKRKVKEAKEDAERKQQEEVEAEAERK).

The protein belongs to the DDRGK1 family. In terms of assembly, interacts with Atg9; the interaction is transient.

It is found in the endoplasmic reticulum membrane. In terms of biological role, substrate adapter for ufmylation, the covalent attachment of the ubiquitin-like modifier UFM1 to substrate proteins. Required for ufmylation of Atg9; protects the nervous system during aging, possibly by stabilizing Atg9 and supporting its function. The sequence is that of DDRGK domain-containing protein 1 from Drosophila willistoni (Fruit fly).